Reading from the N-terminus, the 1041-residue chain is Serine-repeat antigen protein 6 (1041 aa).

An N-terminal signal peptide occupies residues 1–34; sequence MIFFNFKLNRMICPIFFLYIINVLFTQYFIKCEG. Asn84 carries N-linked (GlcNAc...) asparagine glycosylation. A compositionally biased stretch (low complexity) spans 101–111; sequence KVVSSSESGKG. The disordered stretch occupies residues 101–173; it reads KVVSSSESGK…TESSSETLNK (73 aa). The span at 114 to 149 shows a compositional bias: polar residues; it reads VSHTKVTSEGLSDTQPNVTQSVSSSTHTPGSLDSTM. The N-linked (GlcNAc...) asparagine glycan is linked to Asn130. Low complexity predominate over residues 150–168; sequence STEQHSSVSQSSLPTESSS. A glycan (N-linked (GlcNAc...) asparagine) is linked at Asn459. The interval 500 to 577 is disordered; it reads TLPSESPSES…GDTNYVYDFD (78 aa). Residues 502–515 show a composition bias toward low complexity; it reads PSESPSESSSKSDS. Residues 521-545 show a composition bias toward basic and acidic residues; sequence NDKDKNEDKDDMSKNSKEEFKNDDK. N-linked (GlcNAc...) asparagine glycosylation occurs at Asn554. Over residues 564-574 the composition is skewed to low complexity; sequence NINNGDTNYVY. Residue Asn583 is glycosylated (N-linked (GlcNAc...) asparagine). The active site involves Cys654. The N-linked (GlcNAc...) asparagine glycan is linked to Asn684. Catalysis depends on residues His820 and Asn845. Residue Asn984 is glycosylated (N-linked (GlcNAc...) asparagine).

The protein belongs to the peptidase C1 family. Post-translationally, just prior to merozoite egress from host erythrocytes, proteolytically cleaved by SUB1 to generate the active 75kDa form.

The protein resides in the parasitophorous vacuole lumen. The protein localises to the parasitophorous vacuole membrane. Functionally, cysteine protease which plays an essential role in merozoite egress from host erythrocytes. May cleave host SPTB/beta spectrin and ANK1/ankyrin-1 which disrupts host erythrocyte actin cytoskeleton and leads to host erythrocyte cell membrane rupture. This is Serine-repeat antigen protein 6 from Plasmodium falciparum.